A 65-amino-acid chain; its full sequence is Large ribosomal subunit protein bL35 (65 aa).

Belongs to the bacterial ribosomal protein bL35 family.

The protein is Large ribosomal subunit protein bL35 of Clostridium acetobutylicum (strain ATCC 824 / DSM 792 / JCM 1419 / IAM 19013 / LMG 5710 / NBRC 13948 / NRRL B-527 / VKM B-1787 / 2291 / W).